The sequence spans 412 residues: Carboxypeptidase B1 (412 aa).

An N-terminal signal peptide occupies residues 1–18 (MIPRIVVVLLSVLAVVTA). Residues 19–75 (RRSYEGYKVYGIVPESPDEAEILYQIRQSNPDLDFWHLTKQPGDEARVLVAPKDQRS) constitute a propeptide, activation peptide. The 291-residue stretch at 118–408 (SYLRHNEINE…VGIKAMALKV (291 aa)) folds into the Peptidase M14 domain. The Zn(2+) site is built by H175 and E178. An a peptide-binding site is contributed by 175–178 (HARE). An N-linked (GlcNAc...) asparagine glycan is attached at N205. A peptide-binding positions include R230 and 246 to 247 (NR). Cysteines 240 and 263 form a disulfide. Zn(2+) is bound at residue H299. A peptide is bound by residues 300–301 (SY) and Y351. Residue E374 is the Proton donor/acceptor of the active site. N-linked (GlcNAc...) asparagine glycosylation occurs at N395.

The protein belongs to the peptidase M14 family. As to quaternary structure, monomer. Interacts with Dengue virus type 2 (DENV2, MY89-88549 strain) envelope protein E. Interacts with Dengue virus envelope protein E type 3, type 2, type 4 and type 1 with decreasing strength. Zn(2+) is required as a cofactor. In terms of tissue distribution, expressed in midgut (at protein level).

The protein resides in the endoplasmic reticulum. It catalyses the reaction Preferential release of a C-terminal lysine or arginine amino acid.. Inhibited by S.tuberosum metallocarboxypeptidase inhibitor. Carboxypeptidase that preferentially hydrolyzes arginine and lysine residues at the C-terminus. During infection by dengue virus, may play a role in preventing viral packaging, maturation, and release from the midgut. The sequence is that of Carboxypeptidase B1 from Aedes aegypti (Yellowfever mosquito).